Consider the following 324-residue polypeptide: MSLRVMSPAMLNAWSQTLVRAMSTQGGAKNIGFVGLGNMGANMASNLIKAGHKLHVFDISKPACDGLAAKGATVYAKTSELAKNSDFVITMLPNNAIVDASYDEMTADGVNKDTIFIDSSTISPDLVKSLQKKISAKGARFIDAPVSGGVPGAEQATLTFMVGGTEAEYNAVKAVLECMGKKITHCGVYGMGQAAKLCNNMMLAISMIGVSEAMNLAVRQGLDANVFAEIINSSTGRCWASEIYNPVPGVCPSAPANRDYAGGFSSALITKDLGLASGVANASNSPIPLGSLAHKVYQSLCDKGLGNKDFSVVYDLMKKEKFSV.

A mitochondrion-targeting transit peptide spans 1–25 (MSLRVMSPAMLNAWSQTLVRAMSTQ). NAD(+) is bound by residues 29 to 58 (KNIG…HVFD), 92 to 93 (LP), and Thr121. The active site involves Lys196. Residue Lys271 coordinates NAD(+).

This sequence belongs to the HIBADH-related family. 3-hydroxyisobutyrate dehydrogenase subfamily.

The protein localises to the mitochondrion. The enzyme catalyses 3-hydroxy-2-methylpropanoate + NAD(+) = 2-methyl-3-oxopropanoate + NADH + H(+). It functions in the pathway amino-acid degradation; L-valine degradation. The chain is 3-hydroxyisobutyrate dehydrogenase, mitochondrial from Drosophila melanogaster (Fruit fly).